Consider the following 78-residue polypeptide: Large ribosomal subunit protein bL28 (78 aa).

Positions 1–28 are disordered; that stretch reads MSAICQVTGRQPGYGKSVSHSHRRTSRR.

This sequence belongs to the bacterial ribosomal protein bL28 family.

This is Large ribosomal subunit protein bL28 from Corynebacterium diphtheriae (strain ATCC 700971 / NCTC 13129 / Biotype gravis).